Reading from the N-terminus, the 688-residue chain is UvrABC system protein C (688 aa).

Over residues 1–14 the composition is skewed to basic and acidic residues; that stretch reads MSPLDQKNKPRGGA. Positions 1–20 are disordered; sequence MSPLDQKNKPRGGADDLPPE. One can recognise a GIY-YIG domain in the interval 71 to 149; that stretch reads NAPGVYRMMN…IKRLRPRFNV (79 aa). The UVR domain maps to 259–294; that stretch reads QKVKTEISAAMQQASEDLDFERAAIYRDRLAALSHV.

This sequence belongs to the UvrC family. As to quaternary structure, interacts with UvrB in an incision complex.

It is found in the cytoplasm. Its function is as follows. The UvrABC repair system catalyzes the recognition and processing of DNA lesions. UvrC both incises the 5' and 3' sides of the lesion. The N-terminal half is responsible for the 3' incision and the C-terminal half is responsible for the 5' incision. The polypeptide is UvrABC system protein C (Mesorhizobium japonicum (strain LMG 29417 / CECT 9101 / MAFF 303099) (Mesorhizobium loti (strain MAFF 303099))).